Consider the following 203-residue polypeptide: High-molecular weight cobalt-containing nitrile hydratase subunit alpha (203 aa).

Positions 102, 105, 106, and 107 each coordinate Co(3+).

It belongs to the nitrile hydratase subunit alpha family. Heterodimer of an alpha and a beta chain. Requires Co(3+) as cofactor.

The catalysed reaction is an aliphatic primary amide = an aliphatic nitrile + H2O. Its function is as follows. NHase catalyzes the hydration of various nitrile compounds to the corresponding amides. This is High-molecular weight cobalt-containing nitrile hydratase subunit alpha (nhhA) from Rhodococcus rhodochrous.